Here is a 238-residue protein sequence, read N- to C-terminus: Histone deacetylase 7 (238 aa).

Disordered stretches follow at residues 1–26 and 47–72; these read TPGS…PEPA and QQQR…GQQE. Residues 58-158 are interaction with MEF2A; sequence SMDPPLPELQ…LPTEPPEHFP (101 aa). A phosphoserine mark is found at S118 and S164. The interval 145-238 is disordered; sequence PVPSLPTEPP…NPALGSEADG (94 aa). Basic and acidic residues predominate over residues 176–190; the sequence is KSLERRKNPLLRKES. S190 carries the phosphoserine; by PKD/PRKD2 modification. The segment covering 206 to 221 has biased composition (low complexity); sequence SSPSSSSTPASGCSSP.

This sequence belongs to the histone deacetylase family. HD type 2 subfamily. As to quaternary structure, interacts with HDAC1, HDAC2, HDAC3, HDAC4, HDAC5, NCOR1, NCOR2, SIN3A, SIN3B, RBBP4, RBBP7, MTA1L1, SAP30 and MBD3. Interacts with KAT5 and EDNRA. Interacts with the 14-3-3 protein YWHAE, MEF2A, MEF2B and MEF2C. Interacts with ZMYND15. Interacts with KDM5B. Interacts with PML. Interacts with FOXP3. Interacts with RARA. In terms of processing, may be phosphorylated by CaMK1. Phosphorylated by the PKC kinases PKN1 and PKN2, impairing nuclear import. Phosphorylation at Ser-164 by MARK2, MARK3 and PRKD1 promotes interaction with 14-3-3 proteins and export from the nucleus. Phosphorylation at Ser-164 is a prerequisite for phosphorylation at Ser-190.

Its subcellular location is the nucleus. The protein resides in the cytoplasm. It catalyses the reaction N(6)-acetyl-L-lysyl-[histone] + H2O = L-lysyl-[histone] + acetate. The enzyme catalyses N(6)-acetyl-L-lysyl-[protein] + H2O = L-lysyl-[protein] + acetate. Its function is as follows. Responsible for the deacetylation of lysine residues on the N-terminal part of the core histones (H2A, H2B, H3 and H4). Histone deacetylation gives a tag for epigenetic repression and plays an important role in transcriptional regulation, cell cycle progression and developmental events. Histone deacetylases act via the formation of large multiprotein complexes. Involved in muscle maturation by repressing transcription of myocyte enhancer factors such as MEF2A, MEF2B and MEF2C. During muscle differentiation, it shuttles into the cytoplasm, allowing the expression of myocyte enhancer factors. May be involved in Epstein-Barr virus (EBV) latency, possibly by repressing the viral BZLF1 gene. Positively regulates the transcriptional repressor activity of FOXP3. Serves as a corepressor of RARA, causing its deacetylation and inhibition of RARE DNA element binding. In association with RARA, plays a role in the repression of microRNA-10a and thereby in the inflammatory response. Also acetylates non-histone proteins, such as ALKBH5. The chain is Histone deacetylase 7 (Hdac7) from Rattus norvegicus (Rat).